The following is a 324-amino-acid chain: ATP-dependent 6-phosphofructokinase (324 aa).

Position 15 (G15) interacts with ATP. 25–29 (RGVVR) is a binding site for ADP. ATP contacts are provided by residues 76 to 77 (RF) and 106 to 109 (GDGS). D107 lines the Mg(2+) pocket. 130–132 (TID) is a substrate binding site. The active-site Proton acceptor is the D132. An ADP-binding site is contributed by R159. Residues R167 and 174–176 (MGR) contribute to the substrate site. ADP contacts are provided by residues 190 to 192 (GCE), K216, and 218 to 220 (KRH). Substrate-binding positions include E227, R248, and 254–257 (HIQR).

Belongs to the phosphofructokinase type A (PFKA) family. ATP-dependent PFK group I subfamily. Prokaryotic clade 'B1' sub-subfamily. Homotetramer. Requires Mg(2+) as cofactor.

It is found in the cytoplasm. The enzyme catalyses beta-D-fructose 6-phosphate + ATP = beta-D-fructose 1,6-bisphosphate + ADP + H(+). The protein operates within carbohydrate degradation; glycolysis; D-glyceraldehyde 3-phosphate and glycerone phosphate from D-glucose: step 3/4. Allosterically activated by ADP and other diphosphonucleosides, and allosterically inhibited by phosphoenolpyruvate. In terms of biological role, catalyzes the phosphorylation of D-fructose 6-phosphate to fructose 1,6-bisphosphate by ATP, the first committing step of glycolysis. The protein is ATP-dependent 6-phosphofructokinase of Haemophilus ducreyi (strain 35000HP / ATCC 700724).